The chain runs to 454 residues: Protein disulfide-isomerase TMX3 (454 aa).

An N-terminal signal peptide occupies residues 1-24 (MAAWKSWAALRLCATVVLLDMVVC). Positions 25 to 128 (KGFVEDLDES…KDDIIEFAHR (104 aa)) constitute a Thioredoxin domain. The Lumenal portion of the chain corresponds to 25 to 375 (KGFVEDLDES…TIVSIFKSSP (351 aa)). Residues Cys53 and Cys56 each act as nucleophile in the active site. Cys53 and Cys56 are disulfide-bonded. Asn258 and Asn313 each carry an N-linked (GlcNAc...) asparagine glycan. A helical membrane pass occupies residues 376 to 396 (LMGCFLFGLPLGVISIMCYGI). Over 397-454 (YTADTDGGYIEERYEVSKSENENQEQIEESKEQQEPSSGGSVVPTVQEPKDVLEKKKD) the chain is Cytoplasmic. Positions 412–454 (VSKSENENQEQIEESKEQQEPSSGGSVVPTVQEPKDVLEKKKD) are disordered. Over residues 444 to 454 (EPKDVLEKKKD) the composition is skewed to basic and acidic residues. The Di-lysine motif motif lies at 451–454 (KKKD).

This sequence belongs to the protein disulfide isomerase family.

Its subcellular location is the endoplasmic reticulum membrane. The enzyme catalyses Catalyzes the rearrangement of -S-S- bonds in proteins.. Functionally, probable disulfide isomerase, which participates in the folding of proteins containing disulfide bonds. May act as a dithiol oxidase. Acts as a regulator of endoplasmic reticulum-mitochondria contact sites via its ability to regulate redox signals. The chain is Protein disulfide-isomerase TMX3 (TMX3) from Pongo abelii (Sumatran orangutan).